We begin with the raw amino-acid sequence, 256 residues long: Adenosine 5'-phosphosulfate reductase (256 aa).

[4Fe-4S] cluster contacts are provided by cysteine 120, cysteine 121, cysteine 203, and cysteine 206. Residue cysteine 231 is the Nucleophile; cysteine thiosulfonate intermediate of the active site.

It belongs to the PAPS reductase family. CysH subfamily. Requires [4Fe-4S] cluster as cofactor.

Its subcellular location is the cytoplasm. The catalysed reaction is [thioredoxin]-disulfide + sulfite + AMP + 2 H(+) = adenosine 5'-phosphosulfate + [thioredoxin]-dithiol. It functions in the pathway sulfur metabolism; hydrogen sulfide biosynthesis; sulfite from sulfate. Functionally, catalyzes the formation of sulfite from adenosine 5'-phosphosulfate (APS) using thioredoxin as an electron donor. This is Adenosine 5'-phosphosulfate reductase from Allochromatium vinosum (strain ATCC 17899 / DSM 180 / NBRC 103801 / NCIMB 10441 / D) (Chromatium vinosum).